The sequence spans 205 residues: Protein Nef (205 aa).

The N-myristoyl glycine; by host moiety is linked to residue G2. S6 carries the phosphoserine; by host modification. The interval 62 to 65 (DNEE) is acidic; interacts with host PACS1 and PACS2; stabilizes the interaction of NEF/MHC-I with host AP1M1; necessary for MHC-I internalization. Residues 69-78 (PVRPQVPTRP) are SH3-binding; interaction with Src family tyrosine kinases. The PxxP; stabilizes the interaction of NEF/MHC-I with host AP1M1; necessary for MHC-I internalization motif lies at 72-75 (PQVP). The interval 108–124 (EILDLWVYHTQGFFPDW) is mediates dimerization, Nef-PTE1 interaction. A binding to ATP6V1H region spans residues 148 to 180 (LTEEQVEQANEGDNNCLLHPICQHGMEDEDKEV). The Dileucine internalization motif; necessary for CD4 internalization motif lies at 164–165 (LL). The Diacidic; necessary for CD4 internalization signature appears at 174–175 (ED).

Belongs to the lentivirus primate group Nef protein family. Monomer; cytosolic form. Homodimer; membrane bound form. Interacts with Nef associated p21-activated kinase (PAK2); this interaction activates PAK2. Associates with the Nef-MHC-I-AP1 complex; this complex is required for MHC-I internalization. Interacts (via C-terminus) with host PI3-kinase. Interacts with host PACS1; this interaction seems to be weak. Interacts with host PACS2. Interacts with host LCK and MAPK3; these interactions inhibit the kinase activity of the latter. Interacts with host ATP6V1H; this interaction may play a role in CD4 endocytosis. Associates with the CD4-Nef-AP2 complex; this complex is required for CD4 internalization. Interacts with host AP2 subunit alpha and AP2 subunit sigma2. Interacts with TCR-zeta chain; this interaction up-regulates the Fas ligand (FasL) surface expression. Interacts with host HCK, LYN, and SRC; these interactions activate the Src family kinases. Interacts with MAP3K5; this interaction inhibits the Fas and TNFR-mediated death signals. Interacts with beta-COP and PTE1. Interacts with human RACK1; this increases Nef phosphorylation by PKC. Interacts with TP53; this interaction decreases the half-life of TP53, protecting the infected cell against p53-mediated apoptosis. The virion-associated Nef proteins are cleaved by the viral protease to release the soluble C-terminal core protein. Nef is probably cleaved concomitantly with viral structural proteins on maturation of virus particles. Post-translationally, myristoylated. In terms of processing, phosphorylated on serine residues, probably by host PKCdelta and theta.

The protein resides in the host cell membrane. It localises to the virion. Its subcellular location is the secreted. It is found in the host Golgi apparatus membrane. Factor of infectivity and pathogenicity, required for optimal virus replication. Alters numerous pathways of T-lymphocyte function and down-regulates immunity surface molecules in order to evade host defense and increase viral infectivity. Alters the functionality of other immunity cells, like dendritic cells, monocytes/macrophages and NK cells. Functionally, in infected CD4(+) T-lymphocytes, down-regulates the surface MHC-I, mature MHC-II, CD4, CD28, CCR5 and CXCR4 molecules. Mediates internalization and degradation of host CD4 through the interaction of with the cytoplasmic tail of CD4, the recruitment of AP-2 (clathrin adapter protein complex 2), internalization through clathrin coated pits, and subsequent transport to endosomes and lysosomes for degradation. Diverts host MHC-I molecules to the trans-Golgi network-associated endosomal compartments by an endocytic pathway to finally target them for degradation. MHC-I down-regulation may involve AP-1 (clathrin adapter protein complex 1) or possibly Src family kinase-ZAP70/Syk-PI3K cascade recruited by PACS2. In consequence infected cells are masked for immune recognition by cytotoxic T-lymphocytes. Decreasing the number of immune receptors also prevents reinfection by more HIV particles (superinfection). Down-regulates host SERINC3 and SERINC5 thereby excluding these proteins from the viral particles. Virion infectivity is drastically higher when SERINC3 or SERINC5 are excluded from the viral envelope, because these host antiviral proteins impair the membrane fusion event necessary for subsequent virion penetration. In terms of biological role, bypasses host T-cell signaling by inducing a transcriptional program nearly identical to that of anti-CD3 cell activation. Interaction with TCR-zeta chain up-regulates the Fas ligand (FasL). Increasing surface FasL molecules and decreasing surface MHC-I molecules on infected CD4(+) cells send attacking cytotoxic CD8+ T-lymphocytes into apoptosis. Its function is as follows. Plays a role in optimizing the host cell environment for viral replication without causing cell death by apoptosis. Protects the infected cells from apoptosis in order to keep them alive until the next virus generation is ready to strike. Inhibits the Fas and TNFR-mediated death signals by blocking MAP3K5/ASK1. Decreases the half-life of TP53, protecting the infected cell against p53-mediated apoptosis. Inhibits the apoptotic signals regulated by the Bcl-2 family proteins through the formation of a Nef/PI3-kinase/PAK2 complex that leads to activation of PAK2 and induces phosphorylation of host BAD. Extracellular Nef protein targets CD4(+) T-lymphocytes for apoptosis by interacting with CXCR4 surface receptors. This chain is Protein Nef, found in Simian immunodeficiency virus (isolate CPZ GAB1) (SIV-cpz).